The chain runs to 580 residues: Amino-acid acetyltransferase, mitochondrial (580 aa).

The 158-residue stretch at 403–560 (LTMQNLFDDK…KLRHQNGVVD (158 aa)) folds into the N-acetyltransferase domain.

The protein belongs to the acetyltransferase family.

The protein resides in the mitochondrion. The enzyme catalyses L-glutamate + acetyl-CoA = N-acetyl-L-glutamate + CoA + H(+). It functions in the pathway amino-acid biosynthesis; L-arginine biosynthesis; N(2)-acetyl-L-ornithine from L-glutamate: step 1/4. In terms of biological role, N-acetylglutamate synthase involved in arginine biosynthesis. This is Amino-acid acetyltransferase, mitochondrial (ARG2) from Candida albicans (strain SC5314 / ATCC MYA-2876) (Yeast).